A 367-amino-acid chain; its full sequence is Histidinol-phosphate aminotransferase 1 (367 aa).

Lysine 229 is subject to N6-(pyridoxal phosphate)lysine.

Belongs to the class-II pyridoxal-phosphate-dependent aminotransferase family. Histidinol-phosphate aminotransferase subfamily. As to quaternary structure, homodimer. Requires pyridoxal 5'-phosphate as cofactor.

It catalyses the reaction L-histidinol phosphate + 2-oxoglutarate = 3-(imidazol-4-yl)-2-oxopropyl phosphate + L-glutamate. It functions in the pathway amino-acid biosynthesis; L-histidine biosynthesis; L-histidine from 5-phospho-alpha-D-ribose 1-diphosphate: step 7/9. The polypeptide is Histidinol-phosphate aminotransferase 1 (Idiomarina loihiensis (strain ATCC BAA-735 / DSM 15497 / L2-TR)).